A 940-amino-acid chain; its full sequence is Bifunctional uridylyltransferase/uridylyl-removing enzyme (940 aa).

The interval 1–379 is uridylyltransferase; the sequence is MPRRLRPTRL…PGARPKRKAL (379 aa). The uridylyl-removing stretch occupies residues 380–736; the sequence is DVEGFYEDGG…GQVRPGSNAA (357 aa). Positions 496 to 618 constitute an HD domain; sequence VDEHTLRAVG…VENPERLRLL (123 aa). 2 ACT domains span residues 737-821 and 848-929; these read EVVI…PRRG and VVEA…AARP.

This sequence belongs to the GlnD family. Mg(2+) is required as a cofactor.

The enzyme catalyses [protein-PII]-L-tyrosine + UTP = [protein-PII]-uridylyl-L-tyrosine + diphosphate. It catalyses the reaction [protein-PII]-uridylyl-L-tyrosine + H2O = [protein-PII]-L-tyrosine + UMP + H(+). Uridylyltransferase (UTase) activity is inhibited by glutamine, while glutamine activates uridylyl-removing (UR) activity. Functionally, modifies, by uridylylation and deuridylylation, the PII regulatory proteins (GlnB and homologs), in response to the nitrogen status of the cell that GlnD senses through the glutamine level. Under low glutamine levels, catalyzes the conversion of the PII proteins and UTP to PII-UMP and PPi, while under higher glutamine levels, GlnD hydrolyzes PII-UMP to PII and UMP (deuridylylation). Thus, controls uridylylation state and activity of the PII proteins, and plays an important role in the regulation of nitrogen assimilation and metabolism. The chain is Bifunctional uridylyltransferase/uridylyl-removing enzyme from Caulobacter vibrioides (strain ATCC 19089 / CIP 103742 / CB 15) (Caulobacter crescentus).